A 748-amino-acid chain; its full sequence is Acyl-coenzyme A oxidase (748 aa).

The protein belongs to the acyl-CoA oxidase family. As to quaternary structure, homooctamer. FAD is required as a cofactor.

The protein localises to the peroxisome. The catalysed reaction is a 2,3-saturated acyl-CoA + O2 = a (2E)-enoyl-CoA + H2O2. Its pathway is lipid metabolism; peroxisomal fatty acid beta-oxidation. In Saccharomyces cerevisiae (strain ATCC 204508 / S288c) (Baker's yeast), this protein is Acyl-coenzyme A oxidase (POX1).